The primary structure comprises 123 residues: Probable cyclase otaY (123 aa).

Belongs to the aurE cyclase family.

Its pathway is mycotoxin biosynthesis. Probable cyclase; part of the gene cluster that mediates the biosynthesis of ochratoxin A (OTA), a mycotoxin composed of a chlorinated type I polyketide dihydroisocoumarin moiety linked to L-phenylalanine, and demonstrated to have nephrotoxic, immunotoxic, genotoxic, neurotoxic, and teratogenic properties. OtaY is probably involved in the polyketide cyclization. The pathway begins with the highly reducing polyketide synthase otaA that catalyzes the formation of the isocoumarin group during the initial stages of biosynthesis, starting from one acetate and 4 malonate units, to originate the characteristic pentaketide skeleton 7-methylmellein (7-MM) of the OTA molecule. The newly identified cyclase otaY might be involved in the polyketide cyclization reaction during the initial steps of the OTA biosynthesis. 7-MM is then oxidized into 7-carboxymellein (also called ochratoxin beta) by the cytochrome P450 monooxygenase otaC. The NRPS encoded by the otaB gene is involved in the linking of phenylalanine to the dihydroisocoumarin ring. The reaction catalyzed by NRPS results in the production of ochratoxin B (OTB), which is the non-chlorinated analog of OTA and which subsequently serves as the substrate of the halogenase otaD for chlorination activity to form the final molecular structure of OTA, containing a chlorine atom in the C-5 position of the molecule. The chain is Probable cyclase otaY from Aspergillus carbonarius (strain ITEM 5010).